A 640-amino-acid polypeptide reads, in one-letter code: Chaperone protein HtpG (640 aa).

The segment at 1–343 (MQTAENIEHL…SSDLPLNVSR (343 aa)) is a; substrate-binding. The tract at residues 344–564 (EILQESKDID…THDVSGNLGR (221 aa)) is b. The c stretch occupies residues 565 to 640 (LLKSAGQKVP…LLLQNILSGK (76 aa)).

It belongs to the heat shock protein 90 family. Homodimer.

It localises to the cytoplasm. Functionally, molecular chaperone. Has ATPase activity. The chain is Chaperone protein HtpG from Nitrosomonas europaea (strain ATCC 19718 / CIP 103999 / KCTC 2705 / NBRC 14298).